The primary structure comprises 153 residues: Fucose mutarotase (153 aa).

His24 functions as the Proton donor in the catalytic mechanism. Asp32 contacts substrate. Asp69 is a catalytic residue. Substrate contacts are provided by Met79, Tyr120, Tyr138, and Asn140. Tyr120 is a catalytic residue.

It belongs to the RbsD / FucU family. As to quaternary structure, mainly homodimer, but also exists as homotetramer, homooctamer, and homodecamer. The homodimeric form seems catalytically inactive. Widely expressed in various tissues and cell lines, including kidney, liver, and pancreas, marginally in muscle and testis.

It catalyses the reaction alpha-L-fucose = beta-L-fucose. It functions in the pathway carbohydrate metabolism; L-fucose metabolism. Involved in the interconversion between alpha- and beta-L-fucoses. L-Fucose (6-deoxy-L-galactose) exists as alpha-L-fucose (29.5%) and beta-L-fucose (70.5%), the beta-form is metabolized through the salvage pathway. GDP-L-fucose formed either by the de novo or salvage pathways is transported into the endoplasmic reticulum, where it serves as a substrate for N- and O-glycosylations by fucosyltransferases. Fucosylated structures expressed on cell surfaces or secreted in biological fluids are believed to play a critical role in cell-cell adhesion and recognition processes. The sequence is that of Fucose mutarotase (Fuom) from Mus musculus (Mouse).